The sequence spans 20 residues: DELTA-actitoxin-Afr1b (20 aa).

The protein belongs to the actinoporin family. Sea anemone subfamily. As to quaternary structure, octamer or nonamer in membranes. Monomer in the soluble state.

It localises to the secreted. The protein resides in the nematocyst. Its subcellular location is the target cell membrane. Pore-forming toxin (PFT) that consists of a crown-shaped octamer or nonamer that forms cation-selective hydrophilic pores of about 1.5 nm (inside) and 13 nm (outside) and causes cytolysis. It causes cardiac stimulation. Also causes hemolysis (HC(50)=0.4 nM). Interestingly, the Phe-16 is crucial for hemolysis. Pore formation is a multi-step process that involves specific recognition of membrane sphingomyelin (but neither cholesterol nor phosphatidylcholine) using aromatic rich region and adjacent phosphocholine (POC) binding site, firm binding to the membrane (mainly driven by hydrophobic interactions) accompanied by the transfer of the N-terminal region to the lipid-water interface and finally pore formation after oligomerization of monomers. It is probable that a dimeric form is an assembly intermediate before the complete oligomerization. The formation of stable pores occurs only in vesicles composed of DOPC/SM (there is no oligomerization when the PFT is treated with vesicles of DOPC or SM alone). The transmembrane pore displays 8 lateral perforations, one at each subunit-subunit interface, partially occupied by the acyl-chain region of a bridging lipid. Each pore contains 24 lipid molecules, firmly bound to each subunit, that is, 3 lipids (L1, L2, L3, L4 and/or L5) are associated to each subunit. Lipid L1 bridges 2 subunits, whereas lipids L2 and L3 bind to sites at single subunit. This is DELTA-actitoxin-Afr1b from Actinia fragacea (Strawberry anemone).